The following is a 117-amino-acid chain: Large ribosomal subunit protein bL19 (117 aa).

It belongs to the bacterial ribosomal protein bL19 family.

This protein is located at the 30S-50S ribosomal subunit interface and may play a role in the structure and function of the aminoacyl-tRNA binding site. The chain is Large ribosomal subunit protein bL19 from Blochmanniella floridana.